A 180-amino-acid chain; its full sequence is ATP synthase subunit delta (180 aa).

Belongs to the ATPase delta chain family. As to quaternary structure, F-type ATPases have 2 components, F(1) - the catalytic core - and F(0) - the membrane proton channel. F(1) has five subunits: alpha(3), beta(3), gamma(1), delta(1), epsilon(1). F(0) has three main subunits: a(1), b(2) and c(10-14). The alpha and beta chains form an alternating ring which encloses part of the gamma chain. F(1) is attached to F(0) by a central stalk formed by the gamma and epsilon chains, while a peripheral stalk is formed by the delta and b chains.

The protein localises to the cell membrane. In terms of biological role, f(1)F(0) ATP synthase produces ATP from ADP in the presence of a proton or sodium gradient. F-type ATPases consist of two structural domains, F(1) containing the extramembraneous catalytic core and F(0) containing the membrane proton channel, linked together by a central stalk and a peripheral stalk. During catalysis, ATP synthesis in the catalytic domain of F(1) is coupled via a rotary mechanism of the central stalk subunits to proton translocation. Functionally, this protein is part of the stalk that links CF(0) to CF(1). It either transmits conformational changes from CF(0) to CF(1) or is implicated in proton conduction. The protein is ATP synthase subunit delta of Leuconostoc mesenteroides subsp. mesenteroides (strain ATCC 8293 / DSM 20343 / BCRC 11652 / CCM 1803 / JCM 6124 / NCDO 523 / NBRC 100496 / NCIMB 8023 / NCTC 12954 / NRRL B-1118 / 37Y).